Here is a 200-residue protein sequence, read N- to C-terminus: Probable molybdenum cofactor guanylyltransferase (200 aa).

Residues 9-11, lysine 21, aspartate 69, and aspartate 100 contribute to the GTP site; that span reads LAG. Residue aspartate 100 coordinates Mg(2+).

It belongs to the MobA family. The cofactor is Mg(2+).

Its subcellular location is the cytoplasm. The catalysed reaction is Mo-molybdopterin + GTP + H(+) = Mo-molybdopterin guanine dinucleotide + diphosphate. In terms of biological role, transfers a GMP moiety from GTP to Mo-molybdopterin (Mo-MPT) cofactor (Moco or molybdenum cofactor) to form Mo-molybdopterin guanine dinucleotide (Mo-MGD) cofactor. The polypeptide is Probable molybdenum cofactor guanylyltransferase (Bacillus cereus (strain Q1)).